The chain runs to 287 residues: NAD kinase (287 aa).

Asp-56 functions as the Proton acceptor in the catalytic mechanism. NAD(+) is bound by residues 56-57 (DG), Arg-61, 128-129 (ND), and Asp-156.

The protein belongs to the NAD kinase family. The cofactor is a divalent metal cation.

The protein localises to the cytoplasm. It catalyses the reaction NAD(+) + ATP = ADP + NADP(+) + H(+). In terms of biological role, involved in the regulation of the intracellular balance of NAD and NADP, and is a key enzyme in the biosynthesis of NADP. Catalyzes specifically the phosphorylation on 2'-hydroxyl of the adenosine moiety of NAD to yield NADP. The sequence is that of NAD kinase from Thermomicrobium roseum (strain ATCC 27502 / DSM 5159 / P-2).